Here is a 175-residue protein sequence, read N- to C-terminus: Ribosome maturation factor RimP (175 aa).

The segment at 152–175 (EFNRPTDGPGDDGDDGGDDEAGEA) is disordered. Acidic residues predominate over residues 160 to 175 (PGDDGDDGGDDEAGEA).

This sequence belongs to the RimP family.

Its subcellular location is the cytoplasm. Functionally, required for maturation of 30S ribosomal subunits. The protein is Ribosome maturation factor RimP of Nocardioides sp. (strain ATCC BAA-499 / JS614).